The chain runs to 29 residues: Inorganic pyrophosphatase (29 aa).

It is found in the periplasm. The catalysed reaction is diphosphate + H2O = 2 phosphate + H(+). Its function is as follows. Inorganic pyrophosphatase is an essential enzyme for the activation of sulfate by sulfate reducing bacteria. This is a high activity pyrophosphatase. The sequence is that of Inorganic pyrophosphatase from Nitratidesulfovibrio vulgaris (strain ATCC 29579 / DSM 644 / CCUG 34227 / NCIMB 8303 / VKM B-1760 / Hildenborough) (Desulfovibrio vulgaris).